The chain runs to 148 residues: MFYTNMETVHNCFNDATITGDEIIDILAFLQSDESDNPSGINEVVPVDDKKRRRTISNRESAKRSRMKKKKRFEELTEEVNRLNIRNQELKNRLANVVSCGNFISRENNRLKTESVCLEIRLLELYRFLVAMQSPISTSVNYITTLEI.

The bZIP domain occupies 48-97 (DDKKRRRTISNRESAKRSRMKKKKRFEELTEEVNRLNIRNQELKNRLANV). The tract at residues 50-70 (KKRRRTISNRESAKRSRMKKK) is disordered. The interval 50–72 (KKRRRTISNRESAKRSRMKKKKR) is basic motif. Positions 76 to 90 (LTEEVNRLNIRNQEL) are leucine-zipper.

It localises to the nucleus. Functionally, probable transcription factor involved in somatic embryogenesis. Acts as a positive regulator of BHLH109. This chain is Basic leucine zipper 4, found in Arabidopsis thaliana (Mouse-ear cress).